A 308-amino-acid chain; its full sequence is Transaldolase (308 aa).

Lys-125 serves as the catalytic Schiff-base intermediate with substrate.

This sequence belongs to the transaldolase family. Type 1 subfamily. In terms of assembly, homodimer.

The protein localises to the cytoplasm. The enzyme catalyses D-sedoheptulose 7-phosphate + D-glyceraldehyde 3-phosphate = D-erythrose 4-phosphate + beta-D-fructose 6-phosphate. It participates in carbohydrate degradation; pentose phosphate pathway; D-glyceraldehyde 3-phosphate and beta-D-fructose 6-phosphate from D-ribose 5-phosphate and D-xylulose 5-phosphate (non-oxidative stage): step 2/3. Functionally, transaldolase is important for the balance of metabolites in the pentose-phosphate pathway. This Pseudomonas putida (strain ATCC 47054 / DSM 6125 / CFBP 8728 / NCIMB 11950 / KT2440) protein is Transaldolase.